The primary structure comprises 212 residues: Uracil phosphoribosyltransferase (212 aa).

Residues Arg78, Arg103, and 130–138 (DPMLATGSS) contribute to the 5-phospho-alpha-D-ribose 1-diphosphate site. Residues Ile193 and 198–200 (GDA) each bind uracil. Position 199 (Asp199) interacts with 5-phospho-alpha-D-ribose 1-diphosphate.

Belongs to the UPRTase family. It depends on Mg(2+) as a cofactor.

The enzyme catalyses UMP + diphosphate = 5-phospho-alpha-D-ribose 1-diphosphate + uracil. It functions in the pathway pyrimidine metabolism; UMP biosynthesis via salvage pathway; UMP from uracil: step 1/1. With respect to regulation, allosterically activated by GTP. Its function is as follows. Catalyzes the conversion of uracil and 5-phospho-alpha-D-ribose 1-diphosphate (PRPP) to UMP and diphosphate. In Pseudomonas fluorescens (strain SBW25), this protein is Uracil phosphoribosyltransferase.